Consider the following 553-residue polypeptide: Zinc finger protein with KRAB and SCAN domains 3 (553 aa).

A disordered region spans residues glutamate 28 to arginine 49. A phosphoserine mark is found at serine 33 and serine 44. One can recognise an SCAN box domain in the interval arginine 51 to leucine 133. At threonine 136 the chain carries Phosphothreonine. A Glycyl lysine isopeptide (Lys-Gly) (interchain with G-Cter in SUMO2) cross-link involves residue lysine 176. A Phosphothreonine modification is found at threonine 206. Residues leucine 213–proline 273 form the KRAB domain. Serine 223 is modified (phosphoserine). 5 consecutive C2H2-type zinc fingers follow at residues phenylalanine 313 to histidine 335, tyrosine 341 to histidine 363, tyrosine 369 to histidine 391, tyrosine 397 to histidine 419, and tyrosine 425 to histidine 447. Threonine 448 carries the phosphothreonine modification. 2 consecutive C2H2-type zinc fingers follow at residues tyrosine 479–histidine 501 and phenylalanine 507–histidine 529.

The protein belongs to the krueppel C2H2-type zinc-finger protein family. As to expression, expressed in heart, brain, spleen, lung, liver, skeletal muscle, kidney and testis.

The protein localises to the nucleus. It localises to the cytoplasm. Its function is as follows. Transcriptional factor that binds to the consensus sequence 5'-[GT][AG][AGT]GGGG-3' and acts as a repressor of autophagy. Specifically represses expression of genes involved in autophagy and lysosome biogenesis/function such as MAP1LC3B, ULK1 or WIPI2. Associates with chromatin at the ITGB4 and VEGF promoters. This Mus musculus (Mouse) protein is Zinc finger protein with KRAB and SCAN domains 3 (Zkscan3).